Here is a 236-residue protein sequence, read N- to C-terminus: Small ribosomal subunit protein uS3 (236 aa).

Residues 39-107 (IRSYVMEELK…ETSLNIVEIR (69 aa)) enclose the KH type-2 domain. The disordered stretch occupies residues 214–236 (ASEHRATRNDNSSSSLNRRRESV).

This sequence belongs to the universal ribosomal protein uS3 family. Part of the 30S ribosomal subunit. Forms a tight complex with proteins S10 and S14.

Functionally, binds the lower part of the 30S subunit head. Binds mRNA in the 70S ribosome, positioning it for translation. In Bartonella bacilliformis (strain ATCC 35685 / KC583 / Herrer 020/F12,63), this protein is Small ribosomal subunit protein uS3.